Reading from the N-terminus, the 589-residue chain is Serine/threonine-protein kinase shk2 (589 aa).

Positions 23-125 (GIIRSGWVML…WMDLISSRAL (103 aa)) constitute a PH domain. Positions 129–142 (VSSPMNPKHQVHVG) constitute a CRIB domain. In terms of domain architecture, Protein kinase spans 309-566 (FNVKHKLGQG…AAELLTHSFL (258 aa)). ATP-binding positions include 315–323 (LGQGASGSV) and Lys-343. Asp-434 serves as the catalytic Proton acceptor.

It belongs to the protein kinase superfamily. STE Ser/Thr protein kinase family. STE20 subfamily.

The enzyme catalyses L-seryl-[protein] + ATP = O-phospho-L-seryl-[protein] + ADP + H(+). It catalyses the reaction L-threonyl-[protein] + ATP = O-phospho-L-threonyl-[protein] + ADP + H(+). Forms an activated complex with GTP-bound Ras-like cdc42. Participates in Ras-dependent morphological control and mating response pathways. The protein is Serine/threonine-protein kinase shk2 (shk2) of Schizosaccharomyces pombe (strain 972 / ATCC 24843) (Fission yeast).